The chain runs to 715 residues: DNA ligase (715 aa).

NAD(+) is bound by residues 47–51 (DADYD), 96–97 (SL), and E128. K130 serves as the catalytic N6-AMP-lysine intermediate. R151, E188, K306, and K330 together coordinate NAD(+). C435, C438, C453, and C459 together coordinate Zn(2+). One can recognise a BRCT domain in the interval 637 to 715 (RRDTAVAGKT…EDEWLALIGN (79 aa)).

This sequence belongs to the NAD-dependent DNA ligase family. LigA subfamily. The cofactor is Mg(2+). Mn(2+) is required as a cofactor.

The enzyme catalyses NAD(+) + (deoxyribonucleotide)n-3'-hydroxyl + 5'-phospho-(deoxyribonucleotide)m = (deoxyribonucleotide)n+m + AMP + beta-nicotinamide D-nucleotide.. DNA ligase that catalyzes the formation of phosphodiester linkages between 5'-phosphoryl and 3'-hydroxyl groups in double-stranded DNA using NAD as a coenzyme and as the energy source for the reaction. It is essential for DNA replication and repair of damaged DNA. This is DNA ligase from Rhodopseudomonas palustris (strain TIE-1).